Here is a 1236-residue protein sequence, read N- to C-terminus: Complement factor H (1236 aa).

Positions 1-18 (MRFPAKIVWLVLWTVCVA) are cleaved as a signal peptide. 20 consecutive Sushi domains span residues 19–82 (EDCK…ICRK), 83–143 (KPCA…ICEV), 144–207 (VKCL…KCVE), 208–264 (IFCK…TCIE), 265–322 (ITCD…RCAW), 325–383 (CSYP…EEPC), 385–442 (RQCI…RCIR), 444–505 (KTCS…VCIK), 507–562 (CDRP…KAAC), 565–623 (RECS…TCKV), 627–685 (KSCA…VCIE), 688–745 (RTCG…QCIA), 750–804 (RKCK…DCNE), 809–866 (QLCP…RCIE), 868–936 (IGCS…QCVG), 937–994 (LPCG…DCIS), 995–1053 (TNCV…ACRD), 1054–1111 (VSCG…QCKD), 1114–1172 (GKCG…KCLE), and 1173–1235 (ACVI…YPRC). 40 disulfide bridges follow: Cys21/Cys66, Cys52/Cys80, Cys85/Cys129, Cys114/Cys141, Cys146/Cys192, Cys178/Cys205, Cys210/Cys251, Cys237/Cys262, Cys267/Cys309, Cys294/Cys320, Cys325/Cys372, Cys355/Cys383, Cys387/Cys429, Cys414/Cys440, Cys446/Cys492, Cys475/Cys503, Cys507/Cys551, Cys534/Cys562, Cys567/Cys609, Cys595/Cys621, Cys629/Cys672, Cys658/Cys683, Cys690/Cys732, Cys718/Cys743, Cys752/Cys791, Cys780/Cys802, Cys811/Cys853, Cys839/Cys864, Cys870/Cys923, Cys909/Cys934, Cys939/Cys981, Cys967/Cys992, Cys997/Cys1040, Cys1026/Cys1051, Cys1056/Cys1098, Cys1084/Cys1109, Cys1116/Cys1159, Cys1145/Cys1170, Cys1174/Cys1225, and Cys1208/Cys1235. Residues Tyr168 and Tyr170 each carry the sulfotyrosine modification. Sulfotyrosine occurs at positions 465 and 473. Residues Tyr575, Tyr579, and Tyr585 each carry the sulfotyrosine modification. Asn775 is a glycosylation site (N-linked (GlcNAc...) asparagine). Residue Asn1100 is glycosylated (N-linked (GlcNAc...) asparagine).

As to quaternary structure, homodimer. Also forms homooligomers. Interacts with complement protein C3b; this interaction inhibits complement activation. Interacts with complement protein C3d. Interacts with CR3/ITGAM; this interaction mediates adhesion of neutrophils to pathogens leading to pathogen clearance. Sulfated on tyrosine residues. In terms of tissue distribution, CFH is one of the most abundant complement components in blood where the liver is the major source of CFH protein in vivo. in addition, CFH is secreted by additional cell types including monocytes, fibroblasts, or endothelial cells.

Its subcellular location is the secreted. In terms of biological role, glycoprotein that plays an essential role in maintaining a well-balanced immune response by modulating complement activation. Acts as a soluble inhibitor of complement, where its binding to self markers such as glycan structures prevents complement activation and amplification on cell surfaces. Accelerates the decay of the complement alternative pathway (AP) C3 convertase C3bBb, thus preventing local formation of more C3b, the central player of the complement amplification loop. As a cofactor of the serine protease factor I, CFH also regulates proteolytic degradation of already-deposited C3b. In addition, mediates several cellular responses through interaction with specific receptors. For example, interacts with CR3/ITGAM receptor and thereby mediates the adhesion of human neutrophils to different pathogens. In turn, these pathogens are phagocytosed and destroyed. This Bos taurus (Bovine) protein is Complement factor H (CFH).